The following is a 249-amino-acid chain: MAHEIEIDSEADLGRTTFEAEDLYKQRTPITKPPAPRLQSRRASMQETPWTIKDSFNVETKDVVQRCIHTLIPTVNFFDVVDDRPDLYGPFWITTTVIQALFFSNSITEYARYATGHGTSGYSIKKLISAASIIYGYTTIIAVLLWGILVWNKCNPKLLDCLCLYGYANIVWLPVSLATPPFGLLSTLASHIVKYVLTGIGLLISIVFLTRNLYPICQQAGSNLCKLLLFGIIVFHCLLALSLQLIFFS.

5 helical membrane passes run Leu-87 to Ile-107, Ala-131 to Trp-151, Leu-164 to Leu-184, Leu-188 to Phe-208, and Leu-228 to Phe-248.

This sequence belongs to the YIP1 family. In terms of assembly, interacts with the YIP1 family members yip1 and yip4, and several Rab GTPases. The C-terminal cysteines in the Rab GTPase ypt2 are essential for the interaction. Interacts with snx3.

The protein resides in the membrane. In terms of biological role, possible role in vesicle-mediated transport. May be involved in proper membrane localization of Rab GTPases. This Schizosaccharomyces pombe (strain 972 / ATCC 24843) (Fission yeast) protein is Protein YIP5.